The sequence spans 120 residues: Ribosome-binding factor A (120 aa).

Belongs to the RbfA family. As to quaternary structure, monomer. Binds 30S ribosomal subunits, but not 50S ribosomal subunits or 70S ribosomes.

The protein resides in the cytoplasm. Functionally, one of several proteins that assist in the late maturation steps of the functional core of the 30S ribosomal subunit. Associates with free 30S ribosomal subunits (but not with 30S subunits that are part of 70S ribosomes or polysomes). Required for efficient processing of 16S rRNA. May interact with the 5'-terminal helix region of 16S rRNA. The polypeptide is Ribosome-binding factor A (Borreliella burgdorferi (strain ATCC 35210 / DSM 4680 / CIP 102532 / B31) (Borrelia burgdorferi)).